A 266-amino-acid polypeptide reads, in one-letter code: MNTLNAPRNPTRHPAMTADTLVDAPALPHQNGSTEEKLKERGSFGKLYTYKRSPRALGIQAVAKSIGLELEQVELQPANGVPDFYWNLNPLGKTPTFVGADGLVLTECMAIALHVTNEDSTTTLLGSSSLDFVQIIRWISFTNTDVVTRMASWVRPLIGYTPYSKEEVLKAQQQTTQAIGVFEDSLRDRKYLVGDRLTLADIMCVSLVSFGFAQIFDKEWREAFPYFSGWYMMVMHLPIMKAVVEEVPFVEEGLPNAPPTEPFRAP.

Positions 43-123 constitute a GST N-terminal domain; it reads SFGKLYTYKR…HVTNEDSTTT (81 aa). Residues Lys93, Glu107, Cys108, and Asn143 each contribute to the glutathione site. Lys93 contributes to the substrate binding site. One can recognise a GST C-terminal domain in the interval 128–259; sequence SSLDFVQIIR…VEEGLPNAPP (132 aa).

The protein belongs to the GST superfamily.

The protein operates within secondary metabolite biosynthesis; terpenoid biosynthesis. Functionally, glutathione S-transferase; part of the gene cluster that mediates the biosynthesis of the diterpene ent-pimara-8(14),15-diene (PD). Within the cluster, the HMG-CoA reductase AN1593 functions in the mevalonate pathway, which produces isoprenoid precursors. The geranylgeranyl pyrophosphate (GGPP) synthase AN1592 is needed in the formation of GGPP, the precursor for diterpenes. Lastly, the pimaradiene synthase pbcA performs the 2 cyclization steps that convert GGPP to ent-pimara-8(14),15-diene. The putative roles of the remaining cluster enzymes in ent-pimara-8(14),15-diene biosynthesis is unclear. The cytochrome P450 monooxygenase AN1598, the glutathione S-transferase AN1595, the oxidoreductases AN1596 and AN1597 probably function as decorative enzymes. It is possible that in biological conditions the compound is oxidized to ent-pimara-8(14),15-dien-19-oic acid, which is a bioactive diterpene compound predominant in many plant extracts. The chain is Glutathione S-transferase AN1595 from Emericella nidulans (strain FGSC A4 / ATCC 38163 / CBS 112.46 / NRRL 194 / M139) (Aspergillus nidulans).